Consider the following 190-residue polypeptide: Small ribosomal subunit protein uS5 (190 aa).

Positions F22–V85 constitute an S5 DRBM domain.

This sequence belongs to the universal ribosomal protein uS5 family. Part of the 30S ribosomal subunit. Contacts proteins S4 and S8.

With S4 and S12 plays an important role in translational accuracy. Functionally, located at the back of the 30S subunit body where it stabilizes the conformation of the head with respect to the body. This is Small ribosomal subunit protein uS5 from Rhodopseudomonas palustris (strain BisA53).